The following is a 157-amino-acid chain: Ribonuclease 8 (157 aa).

Residues 1–30 form the signal peptide; the sequence is MAPARAGCCPLLLLLLLLLGLWVAEVLVSA. His45 acts as the Proton acceptor in catalysis. 4 disulfides stabilise this stretch: Cys53–Cys96, Cys67–Cys121, Cys85–Cys136, and Cys92–Cys99. Substrate-binding positions include 68–72 and Lys93; that span reads KDLNT. His152 functions as the Proton donor in the catalytic mechanism.

It belongs to the pancreatic ribonuclease family.

The protein localises to the secreted. Its function is as follows. Has a low ribonuclease activity. The chain is Ribonuclease 8 (RNASE8) from Pan troglodytes (Chimpanzee).